Consider the following 603-residue polypeptide: UPF0313 protein MJ1155 (603 aa).

The region spanning 285-557 is the Radical SAM core domain; sequence GIVPVQFSVV…KIQKAICLYR (273 aa). The [4Fe-4S] cluster site is built by cysteine 299, cysteine 303, and cysteine 306.

Belongs to the UPF0313 family. It depends on [4Fe-4S] cluster as a cofactor.

In Methanocaldococcus jannaschii (strain ATCC 43067 / DSM 2661 / JAL-1 / JCM 10045 / NBRC 100440) (Methanococcus jannaschii), this protein is UPF0313 protein MJ1155.